The chain runs to 155 residues: MSRRGTAEEKTAKSDPIYRNRLVNMLVNRILKHGKKSLAYQIIYRALKKIQQKTETNPLSVLRQAIRGVTPDIAVKARRVGGSTHQVPIEIGSTQGKALAIRWLLGASRKRPGRNMAFKLSSELVDAAKGNGDAIRKKEETHRMAEANRAFAHFR.

This sequence belongs to the universal ribosomal protein uS7 family. As to quaternary structure, part of the 30S ribosomal subunit.

The protein localises to the plastid. The protein resides in the chloroplast. In terms of biological role, one of the primary rRNA binding proteins, it binds directly to 16S rRNA where it nucleates assembly of the head domain of the 30S subunit. The sequence is that of Small ribosomal subunit protein uS7cz/uS7cy (rps7-A) from Amborella trichopoda.